A 206-amino-acid chain; its full sequence is Small ribosomal subunit protein uS4 (206 aa).

An S4 RNA-binding domain is found at 96-159 (TRLDNVVYRM…KKQARISASL (64 aa)).

The protein belongs to the universal ribosomal protein uS4 family. Part of the 30S ribosomal subunit. Contacts protein S5. The interaction surface between S4 and S5 is involved in control of translational fidelity.

Its function is as follows. One of the primary rRNA binding proteins, it binds directly to 16S rRNA where it nucleates assembly of the body of the 30S subunit. With S5 and S12 plays an important role in translational accuracy. The polypeptide is Small ribosomal subunit protein uS4 (Shewanella violacea).